A 124-amino-acid polypeptide reads, in one-letter code: UPF0102 protein MSMEG_2508/MSMEI_2448 (124 aa).

This sequence belongs to the UPF0102 family.

The polypeptide is UPF0102 protein MSMEG_2508/MSMEI_2448 (Mycolicibacterium smegmatis (strain ATCC 700084 / mc(2)155) (Mycobacterium smegmatis)).